Reading from the N-terminus, the 244-residue chain is Orotidine 5'-phosphate decarboxylase (244 aa).

Substrate is bound by residues Asp12, Lys34, 61–70 (DLKLFDIPNT), Thr125, Arg187, Gln196, Gly216, and Arg217. Lys63 functions as the Proton donor in the catalytic mechanism.

Belongs to the OMP decarboxylase family. Type 1 subfamily. Homodimer.

It catalyses the reaction orotidine 5'-phosphate + H(+) = UMP + CO2. It participates in pyrimidine metabolism; UMP biosynthesis via de novo pathway; UMP from orotate: step 2/2. Its function is as follows. Catalyzes the decarboxylation of orotidine 5'-monophosphate (OMP) to uridine 5'-monophosphate (UMP). The polypeptide is Orotidine 5'-phosphate decarboxylase (Dictyoglomus turgidum (strain DSM 6724 / Z-1310)).